We begin with the raw amino-acid sequence, 251 residues long: Imidazole glycerol phosphate synthase subunit HisF (251 aa).

Catalysis depends on residues aspartate 11 and aspartate 130.

The protein belongs to the HisA/HisF family. Heterodimer of HisH and HisF.

The protein localises to the cytoplasm. It carries out the reaction 5-[(5-phospho-1-deoxy-D-ribulos-1-ylimino)methylamino]-1-(5-phospho-beta-D-ribosyl)imidazole-4-carboxamide + L-glutamine = D-erythro-1-(imidazol-4-yl)glycerol 3-phosphate + 5-amino-1-(5-phospho-beta-D-ribosyl)imidazole-4-carboxamide + L-glutamate + H(+). It functions in the pathway amino-acid biosynthesis; L-histidine biosynthesis; L-histidine from 5-phospho-alpha-D-ribose 1-diphosphate: step 5/9. In terms of biological role, IGPS catalyzes the conversion of PRFAR and glutamine to IGP, AICAR and glutamate. The HisF subunit catalyzes the cyclization activity that produces IGP and AICAR from PRFAR using the ammonia provided by the HisH subunit. The sequence is that of Imidazole glycerol phosphate synthase subunit HisF from Cytophaga hutchinsonii (strain ATCC 33406 / DSM 1761 / CIP 103989 / NBRC 15051 / NCIMB 9469 / D465).